A 222-amino-acid polypeptide reads, in one-letter code: MFTKQVTNSKVYQWFEERLEIQALADDVSSKYVPPHVNIFYCLGGITLTCFLIQFATGFAMTFYYKPTVTEAFASVQYIMNDVNFGWLIRSIHKWSASMMVLMMILHVFRVYLTGGFKKPRELTWVTGVVLAVITVSFGVTGYSLPWDQVGYWAVKIVSGVPSAIPVVGDTIVELMRGGVSVGQGTLTRYYSLHTFVLPWLIAVFMLLHFLMIRKQGISGPL.

Residues 39 to 59 (IFYCLGGITLTCFLIQFATGF) traverse the membrane as a helical segment. Position 42 (Cys-42) interacts with heme c. Heme b is bound by residues His-93 and His-107. Transmembrane regions (helical) follow at residues 97-117 (ASMMVLMMILHVFRVYLTGGF), 123-143 (LTWVTGVVLAVITVSFGVTGY), and 193-213 (LHTFVLPWLIAVFMLLHFLMI). Heme b is bound by residues His-194 and His-209.

Belongs to the cytochrome b family. PetB subfamily. In terms of assembly, the 4 large subunits of the cytochrome b6-f complex are cytochrome b6, subunit IV (17 kDa polypeptide, PetD), cytochrome f and the Rieske protein, while the 4 small subunits are PetG, PetL, PetM and PetN. The complex functions as a dimer. Requires heme b as cofactor. Heme c is required as a cofactor.

Its subcellular location is the cellular thylakoid membrane. Functionally, component of the cytochrome b6-f complex, which mediates electron transfer between photosystem II (PSII) and photosystem I (PSI), cyclic electron flow around PSI, and state transitions. This is Cytochrome b6 from Cyanothece sp. (strain PCC 7425 / ATCC 29141).